A 587-amino-acid chain; its full sequence is Lipoprotein LpqB (587 aa).

The N-terminal stretch at 1–19 (MERLMRLTILLFLGAVLAG) is a signal peptide. Cys-20 is lipidated: N-palmitoyl cysteine. Cys-20 carries S-diacylglycerol cysteine lipidation.

It belongs to the LpqB lipoprotein family. In terms of assembly, interacts with MtrB, probably extracytoplasmically.

The protein resides in the cell membrane. Its subcellular location is the secreted. It is found in the cell wall. Its function is as follows. May modulate activity of the MtrAB system in controlling homeostasis of the cell wall and cell division. In Mycobacterium tuberculosis (strain CDC 1551 / Oshkosh), this protein is Lipoprotein LpqB.